The primary structure comprises 313 residues: MKPVKTGTVHPVPSAAKQSGWRDLFYSKKAAPYLFTAPFVLSFLVFFLYPIISVFIMSFQRILPGEVSFVGLSNYTALNNPTFYTALWNTLEYTFWTLIVLIPVPLLLAIFLNSKLVKFRNIFKSALFIPALTSTIVAGIIFRLIFGEMETSLANSILLKLGFSPQNWMNNEHTGMFLMVLLASWRWMGINILYFLAGLQNVPKELYEAADIDGANTMKKFLHITLPFLKPVTVYVLTISIIGGFRMFEESYVLWQNNSPGNIGLTLVGYLYQQGLAYNEMGYGAAIGIVLLIVILVVSLISLKLSGSFKGEG.

A run of 6 helical transmembrane segments spans residues 39–59, 91–111, 126–146, 176–196, 224–244, and 281–301; these read FVLS…IMSF, LEYT…LAIF, ALFI…RLIF, MFLM…LYFL, ITLP…IIGG, and MGYG…VSLI. The ABC transmembrane type-1 domain occupies 87–302; that stretch reads LWNTLEYTFW…IVILVVSLIS (216 aa).

It belongs to the binding-protein-dependent transport system permease family. MalFG subfamily. The complex is composed of two ATP-binding proteins (MsmX), two transmembrane proteins (AraP and AraQ) and a solute-binding protein (AraN).

The protein resides in the cell membrane. Its function is as follows. Part of the ABC transporter complex AraNPQ involved in the uptake of arabinooligosaccharides. Transports alpha-1,5-arabinooligosaccharides, at least up to four L-arabinosyl units. Responsible for the translocation of the substrate across the membrane. This is Arabinooligosaccharides transport system permease protein AraP from Bacillus subtilis (strain 168).